We begin with the raw amino-acid sequence, 25 residues long: Androctonin (25 aa).

2 disulfides stabilise this stretch: Cys-4–Cys-20 and Cys-10–Cys-16.

It is found in the secreted. Its function is as follows. Active against both bacteria (Gram-positive and Gram-negative) and filamentous fungi. Acts on the membrane of the bacterial cells. It destabilize a membrane by modifying its properties. In Androctonus australis (Sahara scorpion), this protein is Androctonin.